A 357-amino-acid chain; its full sequence is Cytoplasmic tRNA 2-thiolation protein 1 (357 aa).

Residues Gly314 to Ser348 form a disordered region. The segment covering Arg321–Val332 has biased composition (basic and acidic residues).

The protein belongs to the TtcA family. CTU1/NCS6/ATPBD3 subfamily.

It localises to the cytoplasm. The protein operates within tRNA modification; 5-methoxycarbonylmethyl-2-thiouridine-tRNA biosynthesis. Functionally, plays a central role in 2-thiolation of mcm(5)S(2)U at tRNA wobble positions of tRNA(Lys), tRNA(Glu) and tRNA(Gln). Directly binds tRNAs and probably acts by catalyzing adenylation of tRNAs, an intermediate required for 2-thiolation. It is unclear whether it acts as a sulfurtransferase that transfers sulfur from thiocarboxylated URM1 onto the uridine of tRNAs at wobble position. The protein is Cytoplasmic tRNA 2-thiolation protein 1 of Chlamydomonas reinhardtii (Chlamydomonas smithii).